The chain runs to 147 residues: Small nuclear ribonucleoprotein-associated protein B (147 aa).

Residues 1–84 (MGTTKMVSLL…IVSLSVQGPP (84 aa)) form the Sm domain. 2 disordered regions span residues 87-106 (DPSM…PAGR) and 128-147 (APPP…FRPV).

It belongs to the snRNP SmB/SmN family. As to quaternary structure, belongs to the 40S cdc5-associated complex (or cwf complex), a spliceosome sub-complex reminiscent of a late-stage spliceosome composed of the U2, U5 and U6 snRNAs and at least brr2, cdc5, cwf2/prp3, cwf3/syf1, cwf4/syf3, cwf5/ecm2, spp42/cwf6, cwf7/spf27, cwf8, cwf9, cwf10, cwf11, cwf12, prp45/cwf13, cwf14, cwf15, cwf16, cwf17, cwf18, cwf19, cwf20, cwf21, cwf22, cwf23, cwf24, cwf25, cwf26, cyp7/cwf27, cwf28, cwf29/ist3, lea1, msl1, prp5/cwf1, prp10, prp12/sap130, prp17, prp22, sap61, sap62, sap114, sap145, slu7, smb1, smd1, smd3, smf1, smg1 and syf2.

Its subcellular location is the nucleus. It is found in the cytoplasm. Functionally, plays a role in pre-mRNA splicing as a core component of the spliceosomal U1, U2, U4 and U5 small nuclear ribonucleoproteins (snRNPs), the building blocks of the spliceosome. The protein is Small nuclear ribonucleoprotein-associated protein B (smb1) of Schizosaccharomyces pombe (strain 972 / ATCC 24843) (Fission yeast).